Reading from the N-terminus, the 102-residue chain is NADH-quinone oxidoreductase subunit K (102 aa).

3 helical membrane passes run 6-26 (LEHGLAVAGILFCLGLVGLMV), 30-50 (ILFVLMSLEIMMNAAALAFIV), and 62-82 (VMFILVISLAAAEASIGLAIL).

It belongs to the complex I subunit 4L family. NDH-1 is composed of 13 different subunits. Subunits NuoA, H, J, K, L, M, N constitute the membrane sector of the complex.

It is found in the cell inner membrane. It carries out the reaction a quinone + NADH + 5 H(+)(in) = a quinol + NAD(+) + 4 H(+)(out). NDH-1 shuttles electrons from NADH, via FMN and iron-sulfur (Fe-S) centers, to quinones in the respiratory chain. The immediate electron acceptor for the enzyme in this species is believed to be ubiquinone. Couples the redox reaction to proton translocation (for every two electrons transferred, four hydrogen ions are translocated across the cytoplasmic membrane), and thus conserves the redox energy in a proton gradient. This is NADH-quinone oxidoreductase subunit K from Pseudomonas fluorescens (strain SBW25).